The sequence spans 906 residues: Protein translocase subunit SecA (906 aa).

Residues glutamine 89, 107–111 (GEGKT), and aspartate 502 contribute to the ATP site. Cysteine 890, cysteine 892, cysteine 901, and histidine 902 together coordinate Zn(2+).

Belongs to the SecA family. In terms of assembly, monomer and homodimer. Part of the essential Sec protein translocation apparatus which comprises SecA, SecYEG and auxiliary proteins SecDF-YajC and YidC. It depends on Zn(2+) as a cofactor.

It is found in the cell inner membrane. The protein localises to the cytoplasm. It carries out the reaction ATP + H2O + cellular proteinSide 1 = ADP + phosphate + cellular proteinSide 2.. In terms of biological role, part of the Sec protein translocase complex. Interacts with the SecYEG preprotein conducting channel. Has a central role in coupling the hydrolysis of ATP to the transfer of proteins into and across the cell membrane, serving both as a receptor for the preprotein-SecB complex and as an ATP-driven molecular motor driving the stepwise translocation of polypeptide chains across the membrane. The protein is Protein translocase subunit SecA of Brucella suis biovar 1 (strain 1330).